The primary structure comprises 275 residues: MTLQQEIIQALGAKPHINPEEEIRRSVDFLKAYLKTYPFLKSLVLGISGGQDSTLAGKLSQMAITELREETGDNALQFIAVRLPYGVQADEQDCQDAIAFIQPDRVLTVNIKGAVLASEQALREAGIELSDFVRGNEKARERMKAQYSIAGMTHGVVVGTDHAAEAITGFFTKYGDGGTDINPLHRLNKRQGKQLLAALGCPEHLYKKVPTADLEDDRPSLPDEAALGVTYDNIDDYLEGKTLDSAIAKTIEGWYVKTEHKRRLPITVFDDFWKK.

Residue 46 to 53 (GISGGQDS) participates in ATP binding. Position 52 (D52) interacts with Mg(2+). R140 lines the deamido-NAD(+) pocket. ATP is bound at residue T160. E165 is a Mg(2+) binding site. Deamido-NAD(+)-binding residues include K173 and D180. Residues K189 and T211 each contribute to the ATP site. Residue 260 to 261 (HK) coordinates deamido-NAD(+).

Belongs to the NAD synthetase family. As to quaternary structure, homodimer.

The catalysed reaction is deamido-NAD(+) + NH4(+) + ATP = AMP + diphosphate + NAD(+) + H(+). It functions in the pathway cofactor biosynthesis; NAD(+) biosynthesis; NAD(+) from deamido-NAD(+) (ammonia route): step 1/1. In terms of biological role, catalyzes the ATP-dependent amidation of deamido-NAD to form NAD. Uses ammonia as a nitrogen source. The chain is NH(3)-dependent NAD(+) synthetase from Salmonella typhi.